The primary structure comprises 189 residues: HTH-type transcriptional regulator Hpr (189 aa).

Residues 12-156 form the HTH marR-type domain; sequence ALLYSHKIVQ…ISAIVRRLYG (145 aa). Positions 62–85 form a DNA-binding region, H-T-H motif; the sequence is ISEIAKYGVMHVSTAFNFSKKLED.

As to quaternary structure, homodimer.

In terms of biological role, negative regulator of protease production and sporulation. The chain is HTH-type transcriptional regulator Hpr from Exiguobacterium sibiricum (strain DSM 17290 / CCUG 55495 / CIP 109462 / JCM 13490 / 255-15).